The following is a 375-amino-acid chain: MLLFLLSALVLLTQSLGYLEADMKTYSQRTAPSACTLVMCSSVESGLPGRDGRDGREGPRGEKGDPGLPGAAGKAGMPGEAGPVGPKGDNGSIGEPGPKGDTGPSGPPGPPGVPGPAGREGPLGKQGNIGPQGKPGPKGEAGPKGEVGAPGMQGSAGARGPAGPKGDRGVPGERGAPGNAGAAGSAGVMGPQGSPGARGPPGLKGDKGVPGDKGAKGESGLPDVASLRQQVEALQKQVQHLQAAFSQYKKVELFPNGQSVGEKIFKTAGFVKPFTEAQLVCTQAGGQLASPRSAAENAALQQLVIAQNEAAFLSMTDSKMEGKFTYPTGESLVYSNWAPGEPNDDGGSEDCVEIFTNGKWNDRACGEKRLVVCEF.

A signal peptide spans 1–21 (MLLFLLSALVLLTQSLGYLEA). An S-nitrosocysteine mark is found at C35 and C40. Positions 43–221 (VESGLPGRDG…DKGAKGESGL (179 aa)) are disordered. The 177-residue stretch at 46–222 (GLPGRDGRDG…KGAKGESGLP (177 aa)) folds into the Collagen-like domain. Residues 50–65 (RDGRDGREGPRGEKGD) show a composition bias toward basic and acidic residues. P78 carries the 4-hydroxyproline modification. Position 87 is a 5-hydroxylysine (K87). A glycan (N-linked (GlcNAc...) asparagine) is linked at N90. At P96 the chain carries 4-hydroxyproline. At K99 the chain carries 5-hydroxylysine. The span at 105-114 (SGPPGPPGVP) shows a compositional bias: pro residues. Composition is skewed to low complexity over residues 116–132 (PAGR…IGPQ) and 138–150 (KGEA…VGAP). A 4-hydroxyproline mark is found at P171 and P177. The span at 173 to 189 (ERGAPGNAGAAGSAGVM) shows a compositional bias: low complexity. Basic and acidic residues predominate over residues 204-216 (KGDKGVPGDKGAK). Residues 223 to 251 (DVASLRQQVEALQKQVQHLQAAFSQYKKV) are a coiled coil. The C-type lectin domain occupies 260–374 (VGEKIFKTAG…CGEKRLVVCE (115 aa)). 2 disulfide bridges follow: C281–C373 and C351–C365.

Belongs to the SFTPD family. As to quaternary structure, oligomeric complex of 4 set of homotrimers. In terms of processing, hydroxylation on proline residues within the sequence motif, GXPG, is most likely to be 4-hydroxy as this fits the requirement for 4-hydroxylation in vertebrates. Post-translationally, S-nitrosylation at Cys-35 and Cys-40 alters the quaternary structure which results in a pro-inflammatory chemoattractive signaling activity with macrophages.

It is found in the secreted. It localises to the extracellular space. The protein resides in the extracellular matrix. The protein localises to the surface film. Contributes to the lung's defense against inhaled microorganisms, organic antigens and toxins. Interacts with compounds such as bacterial lipopolysaccharides, oligosaccharides and fatty acids and modulates leukocyte action in immune response. May participate in the extracellular reorganization or turnover of pulmonary surfactant. Binds strongly maltose residues and to a lesser extent other alpha-glucosyl moieties. The sequence is that of Pulmonary surfactant-associated protein D (SFTPD) from Macaca mulatta (Rhesus macaque).